The sequence spans 134 residues: MSEIYRFGVSLDKSLIEAFDRHIQSRHYHNRSEALRDLIREELVRKKWTEGGTVAGAVIMTYDHHKRELVNRLLDIQHDFQKTIIASSHVHLDHDHCLEVIAVKGNAADVEQLSLKLKSLVGVKHLSLSISSAE.

Residues His78, His89, His91, and Cys97 each contribute to the Ni(2+) site.

It belongs to the transcriptional regulatory CopG/NikR family. Ni(2+) serves as cofactor.

In terms of biological role, transcriptional regulator. The protein is Putative nickel-responsive regulator of Chlorobium phaeobacteroides (strain DSM 266 / SMG 266 / 2430).